Here is a 254-residue protein sequence, read N- to C-terminus: MTSSIRPLLAGNWKMNGTSESLRELRAIASGIDSDRDRCFEALVCVPATLLSRASDILSDENIFLGGQDCHFNDSGPHTGDISACMLKEAGASHVILGHSERRTDYRESDAIVCAKVKAAWRAGLVALICIGETLEERENNTVLDVLAQQLKGSVPAGAMDHNTVIAYEPRWAIGTGKTPTSEDIAQVHGFIRKEVSHRFGDEGHKIRLLYGGSVKPSNASELLETSHVNGALIGGASLKATDFLTICNIYRKL.

Residue 12-14 coordinates substrate; it reads NWK. Catalysis depends on H99, which acts as the Electrophile. E169 functions as the Proton acceptor in the catalytic mechanism. Residues G175, S214, and 235–236 each bind substrate; that span reads GG.

Belongs to the triosephosphate isomerase family. In terms of assembly, homodimer.

It localises to the cytoplasm. The enzyme catalyses D-glyceraldehyde 3-phosphate = dihydroxyacetone phosphate. The protein operates within carbohydrate biosynthesis; gluconeogenesis. Its pathway is carbohydrate degradation; glycolysis; D-glyceraldehyde 3-phosphate from glycerone phosphate: step 1/1. Functionally, involved in the gluconeogenesis. Catalyzes stereospecifically the conversion of dihydroxyacetone phosphate (DHAP) to D-glyceraldehyde-3-phosphate (G3P). This Bartonella bacilliformis (strain ATCC 35685 / KC583 / Herrer 020/F12,63) protein is Triosephosphate isomerase.